The sequence spans 111 residues: Cytochrome b-c1 complex subunit 7 (111 aa).

Position 2 is an N-acetylalanine (Ala-2). Lys-12 carries the N6-acetyllysine; alternate modification. Lys-12 is modified (N6-succinyllysine; alternate). Residue Lys-19 is modified to N6-acetyllysine. N6-acetyllysine; alternate is present on Lys-78. Lys-78 is modified (N6-succinyllysine; alternate). Lys-83 is modified (N6-acetyllysine). Lys-88 carries the post-translational modification N6-acetyllysine; alternate. Lys-88 is subject to N6-succinyllysine; alternate. Residue Lys-96 is modified to N6-acetyllysine.

It belongs to the UQCRB/QCR7 family. In terms of assembly, component of the ubiquinol-cytochrome c oxidoreductase (cytochrome b-c1 complex, complex III, CIII), a multisubunit enzyme composed of 11 subunits. The complex is composed of 3 respiratory subunits cytochrome b, cytochrome c1 and Rieske protein UQCRFS1, 2 core protein subunits UQCRC1/QCR1 and UQCRC2/QCR2, and 6 low-molecular weight protein subunits UQCRH/QCR6, UQCRB/QCR7, UQCRQ/QCR8, UQCR10/QCR9, UQCR11/QCR10 and subunit 9, the cleavage product of Rieske protein UQCRFS1. The complex exists as an obligatory dimer and forms supercomplexes (SCs) in the inner mitochondrial membrane with NADH-ubiquinone oxidoreductase (complex I, CI) and cytochrome c oxidase (complex IV, CIV), resulting in different assemblies (supercomplex SCI(1)III(2)IV(1) and megacomplex MCI(2)III(2)IV(2)).

Its subcellular location is the mitochondrion inner membrane. In terms of biological role, component of the ubiquinol-cytochrome c oxidoreductase, a multisubunit transmembrane complex that is part of the mitochondrial electron transport chain which drives oxidative phosphorylation. The respiratory chain contains 3 multisubunit complexes succinate dehydrogenase (complex II, CII), ubiquinol-cytochrome c oxidoreductase (cytochrome b-c1 complex, complex III, CIII) and cytochrome c oxidase (complex IV, CIV), that cooperate to transfer electrons derived from NADH and succinate to molecular oxygen, creating an electrochemical gradient over the inner membrane that drives transmembrane transport and the ATP synthase. The cytochrome b-c1 complex catalyzes electron transfer from ubiquinol to cytochrome c, linking this redox reaction to translocation of protons across the mitochondrial inner membrane, with protons being carried across the membrane as hydrogens on the quinol. In the process called Q cycle, 2 protons are consumed from the matrix, 4 protons are released into the intermembrane space and 2 electrons are passed to cytochrome c. The sequence is that of Cytochrome b-c1 complex subunit 7 (Uqcrb) from Mus musculus (Mouse).